The following is a 307-amino-acid chain: Manganese-dependent inorganic pyrophosphatase (307 aa).

6 residues coordinate Mn(2+): His7, Asp11, Asp13, Asp66, His88, and Asp147.

Mn(2+) serves as cofactor.

Its subcellular location is the cytoplasm. The catalysed reaction is diphosphate + H2O = 2 phosphate + H(+). The chain is Manganese-dependent inorganic pyrophosphatase (ppaC) from Methanocaldococcus jannaschii (strain ATCC 43067 / DSM 2661 / JAL-1 / JCM 10045 / NBRC 100440) (Methanococcus jannaschii).